A 967-amino-acid polypeptide reads, in one-letter code: Isoleucine--tRNA ligase 2 (967 aa).

The short motif at 58 to 68 (PYANGDIHIGH) is the 'HIGH' region element. A disordered region spans residues 430–463 (EADPGRADVTEEAGATGEARKVGKAEEAEEAGPV). Residue E598 participates in L-isoleucyl-5'-AMP binding. The 'KMSKS' region signature appears at 639–643 (KMSKS). K642 serves as a coordination point for ATP. C922, C925, C942, and C945 together coordinate Zn(2+).

This sequence belongs to the class-I aminoacyl-tRNA synthetase family. IleS type 1 subfamily. As to quaternary structure, monomer. Zn(2+) is required as a cofactor.

The protein localises to the cytoplasm. The catalysed reaction is tRNA(Ile) + L-isoleucine + ATP = L-isoleucyl-tRNA(Ile) + AMP + diphosphate. Catalyzes the attachment of isoleucine to tRNA(Ile). As IleRS can inadvertently accommodate and process structurally similar amino acids such as valine, to avoid such errors it has two additional distinct tRNA(Ile)-dependent editing activities. One activity is designated as 'pretransfer' editing and involves the hydrolysis of activated Val-AMP. The other activity is designated 'posttransfer' editing and involves deacylation of mischarged Val-tRNA(Ile). The polypeptide is Isoleucine--tRNA ligase 2 (Burkholderia pseudomallei (strain K96243)).